The chain runs to 55 residues: uncharacterized protein (55 aa).

A compositionally biased stretch (polar residues) spans 1 to 15 (MVGQEQLESSPLCQH). Residues 1 to 26 (MVGQEQLESSPLCQHSDNETETKREC) are disordered. The span at 16-26 (SDNETETKREC) shows a compositional bias: basic and acidic residues.

This is an uncharacterized protein from Escherichia coli (strain K12).